Here is a 202-residue protein sequence, read N- to C-terminus: FMN reductase (NADH) RutF 1 (202 aa).

A disordered region spans residues 168 to 202 (PRTPRSGSAPAEPARAPRAVGARPAEGPALALRSA). The span at 171-196 (PRSGSAPAEPARAPRAVGARPAEGPA) shows a compositional bias: low complexity.

This sequence belongs to the non-flavoprotein flavin reductase family. RutF subfamily.

The enzyme catalyses FMNH2 + NAD(+) = FMN + NADH + 2 H(+). Catalyzes the reduction of FMN to FMNH2 which is used to reduce pyrimidine by RutA via the Rut pathway. The sequence is that of FMN reductase (NADH) RutF 1 from Methylorubrum extorquens (strain PA1) (Methylobacterium extorquens).